We begin with the raw amino-acid sequence, 282 residues long: 2,3,4,5-tetrahydropyridine-2,6-dicarboxylate N-succinyltransferase (282 aa).

R109 and D146 together coordinate substrate.

Belongs to the transferase hexapeptide repeat family. In terms of assembly, homotrimer.

It localises to the cytoplasm. The enzyme catalyses (S)-2,3,4,5-tetrahydrodipicolinate + succinyl-CoA + H2O = (S)-2-succinylamino-6-oxoheptanedioate + CoA. Its pathway is amino-acid biosynthesis; L-lysine biosynthesis via DAP pathway; LL-2,6-diaminopimelate from (S)-tetrahydrodipicolinate (succinylase route): step 1/3. The sequence is that of 2,3,4,5-tetrahydropyridine-2,6-dicarboxylate N-succinyltransferase from Bartonella bacilliformis (strain ATCC 35685 / KC583 / Herrer 020/F12,63).